We begin with the raw amino-acid sequence, 423 residues long: UDP-N-acetylglucosamine 1-carboxyvinyltransferase 1 (423 aa).

Position 23–24 (23–24) interacts with phosphoenolpyruvate; that stretch reads KN. Arginine 96 is a binding site for UDP-N-acetyl-alpha-D-glucosamine. Cysteine 120 functions as the Proton donor in the catalytic mechanism. Cysteine 120 is subject to 2-(S-cysteinyl)pyruvic acid O-phosphothioketal. UDP-N-acetyl-alpha-D-glucosamine-binding positions include 125–129, aspartate 309, and valine 331; that span reads RPIDL.

It belongs to the EPSP synthase family. MurA subfamily.

Its subcellular location is the cytoplasm. It catalyses the reaction phosphoenolpyruvate + UDP-N-acetyl-alpha-D-glucosamine = UDP-N-acetyl-3-O-(1-carboxyvinyl)-alpha-D-glucosamine + phosphate. Its pathway is cell wall biogenesis; peptidoglycan biosynthesis. Functionally, cell wall formation. Adds enolpyruvyl to UDP-N-acetylglucosamine. In Streptococcus thermophilus (strain CNRZ 1066), this protein is UDP-N-acetylglucosamine 1-carboxyvinyltransferase 1.